The primary structure comprises 502 residues: ATP synthase subunit alpha (502 aa).

169-176 (GDRQTGKT) contributes to the ATP binding site.

The protein belongs to the ATPase alpha/beta chains family. As to quaternary structure, F-type ATPases have 2 components, CF(1) - the catalytic core - and CF(0) - the membrane proton channel. CF(1) has five subunits: alpha(3), beta(3), gamma(1), delta(1), epsilon(1). CF(0) has three main subunits: a(1), b(2) and c(9-12). The alpha and beta chains form an alternating ring which encloses part of the gamma chain. CF(1) is attached to CF(0) by a central stalk formed by the gamma and epsilon chains, while a peripheral stalk is formed by the delta and b chains.

The protein resides in the cell membrane. It catalyses the reaction ATP + H2O + 4 H(+)(in) = ADP + phosphate + 5 H(+)(out). In terms of biological role, produces ATP from ADP in the presence of a proton gradient across the membrane. The alpha chain is a regulatory subunit. The sequence is that of ATP synthase subunit alpha from Exiguobacterium sibiricum (strain DSM 17290 / CCUG 55495 / CIP 109462 / JCM 13490 / 255-15).